Reading from the N-terminus, the 133-residue chain is MKLKGRKIVGGKAEGEVIVSRKPLSFLGGVDPETGIVTDAESDIRGQSIAGKILVFPRGKGSTVGSYVIYALKKNNKAPKAIIVGEAETIVATGAIISDIPMVDGVDVSKLKTGMKVRVDADSGEVEILEDGE.

Catalysis depends on Ser-62, which acts as the Proton acceptor.

Belongs to the AcnX type II small subunit family. As to quaternary structure, heterodimer composed of a large subunit (PMDh-L) and a small subunit (PMDh-S).

The catalysed reaction is (R)-5-phosphomevalonate = (2E)-3-methyl-5-phosphooxypent-2-enoate + H2O. It functions in the pathway isoprenoid biosynthesis; isopentenyl diphosphate biosynthesis via mevalonate pathway. Component of a hydro-lyase that catalyzes the dehydration of mevalonate 5-phosphate (MVA5P) to form trans-anhydromevalonate 5-phosphate (tAHMP). Involved in the archaeal mevalonate (MVA) pathway, which provides fundamental precursors for isoprenoid biosynthesis, such as isopentenyl diphosphate (IPP) and dimethylallyl diphosphate (DMAPP). The polypeptide is Phosphomevalonate dehydratase small subunit (Thermococcus kodakarensis (strain ATCC BAA-918 / JCM 12380 / KOD1) (Pyrococcus kodakaraensis (strain KOD1))).